The following is a 180-amino-acid chain: Large ribosomal subunit protein uL5 (180 aa).

It belongs to the universal ribosomal protein uL5 family. As to quaternary structure, part of the 50S ribosomal subunit; part of the 5S rRNA/L5/L18/L25 subcomplex. Contacts the 5S rRNA and the P site tRNA. Forms a bridge to the 30S subunit in the 70S ribosome.

In terms of biological role, this is one of the proteins that bind and probably mediate the attachment of the 5S RNA into the large ribosomal subunit, where it forms part of the central protuberance. In the 70S ribosome it contacts protein S13 of the 30S subunit (bridge B1b), connecting the 2 subunits; this bridge is implicated in subunit movement. Contacts the P site tRNA; the 5S rRNA and some of its associated proteins might help stabilize positioning of ribosome-bound tRNAs. The chain is Large ribosomal subunit protein uL5 from Rubrobacter xylanophilus (strain DSM 9941 / JCM 11954 / NBRC 16129 / PRD-1).